An 842-amino-acid polypeptide reads, in one-letter code: Molybdenum cofactor sulfurase (842 aa).

Lysine 236 is modified (N6-(pyridoxal phosphate)lysine). Residue cysteine 402 is part of the active site. A disordered region spans residues 637-680 (PGSQHGDAQRSSKARLQKHQITTDQESDVQEVHPGSGTTTDSTW). The 169-residue stretch at 663 to 831 (SDVQEVHPGS…AARGDVAYPT (169 aa)) folds into the MOSC domain.

Belongs to the class-V pyridoxal-phosphate-dependent aminotransferase family. MOCOS subfamily. Requires pyridoxal 5'-phosphate as cofactor.

The enzyme catalyses Mo-molybdopterin + L-cysteine + AH2 = thio-Mo-molybdopterin + L-alanine + A + H2O. Its pathway is cofactor biosynthesis; molybdopterin biosynthesis. Functionally, sulfurates the molybdenum cofactor. Sulfation of molybdenum is essential for xanthine dehydrogenase (XDH) and aldehyde oxidase (ADO) enzymes in which molybdenum cofactor is liganded by 1 oxygen and 1 sulfur atom in active form. This is Molybdenum cofactor sulfurase from Pyricularia oryzae (strain 70-15 / ATCC MYA-4617 / FGSC 8958) (Rice blast fungus).